The following is a 387-amino-acid chain: Polyphosphate kinase (387 aa).

Mg(2+) is bound by residues R347 and R377.

It belongs to the polyphosphate kinase 1 (PPK1) family. Mg(2+) is required as a cofactor. An intermediate of this reaction is the autophosphorylated ppk in which a phosphate is covalently linked to a histidine residue through a N-P bond.

It catalyses the reaction [phosphate](n) + ATP = [phosphate](n+1) + ADP. Its function is as follows. Catalyzes the reversible transfer of the terminal phosphate of ATP to form a long-chain polyphosphate (polyP). The protein is Polyphosphate kinase (ppk) of Aphanizomenon baltica.